The chain runs to 262 residues: Acyl-[acyl-carrier-protein]--UDP-N-acetylglucosamine O-acyltransferase (262 aa).

The protein belongs to the transferase hexapeptide repeat family. LpxA subfamily. Homotrimer.

The protein resides in the cytoplasm. The catalysed reaction is a (3R)-hydroxyacyl-[ACP] + UDP-N-acetyl-alpha-D-glucosamine = a UDP-3-O-[(3R)-3-hydroxyacyl]-N-acetyl-alpha-D-glucosamine + holo-[ACP]. The protein operates within glycolipid biosynthesis; lipid IV(A) biosynthesis; lipid IV(A) from (3R)-3-hydroxytetradecanoyl-[acyl-carrier-protein] and UDP-N-acetyl-alpha-D-glucosamine: step 1/6. Its function is as follows. Involved in the biosynthesis of lipid A, a phosphorylated glycolipid that anchors the lipopolysaccharide to the outer membrane of the cell. The polypeptide is Acyl-[acyl-carrier-protein]--UDP-N-acetylglucosamine O-acyltransferase (Klebsiella pneumoniae (strain 342)).